Here is a 379-residue protein sequence, read N- to C-terminus: Homoserine O-succinyltransferase (379 aa).

The AB hydrolase-1 domain occupies 51-360 (NAVLICHALS…DAPQGHDAFL (310 aa)). S157 functions as the Nucleophile in the catalytic mechanism. R227 contributes to the substrate binding site. Active-site residues include D323 and H356. D357 lines the substrate pocket.

It belongs to the AB hydrolase superfamily. MetX family. As to quaternary structure, homodimer.

It localises to the cytoplasm. The enzyme catalyses L-homoserine + succinyl-CoA = O-succinyl-L-homoserine + CoA. It functions in the pathway amino-acid biosynthesis; L-methionine biosynthesis via de novo pathway; O-succinyl-L-homoserine from L-homoserine: step 1/1. Its function is as follows. Transfers a succinyl group from succinyl-CoA to L-homoserine, forming succinyl-L-homoserine. The polypeptide is Homoserine O-succinyltransferase (Pseudomonas savastanoi pv. phaseolicola (strain 1448A / Race 6) (Pseudomonas syringae pv. phaseolicola (strain 1448A / Race 6))).